A 150-amino-acid chain; its full sequence is Protein SprT-like (150 aa).

Residues 11–149 enclose the SprT-like domain; it reads ELVDKLSLTY…CGKCRGSLKE (139 aa). Position 70 (His70) interacts with Zn(2+). Glu71 is an active-site residue. His74 contacts Zn(2+).

The protein belongs to the SprT family. Zn(2+) serves as cofactor.

It is found in the cytoplasm. This Oceanobacillus iheyensis (strain DSM 14371 / CIP 107618 / JCM 11309 / KCTC 3954 / HTE831) protein is Protein SprT-like.